Reading from the N-terminus, the 181-residue chain is Adenylate kinase (181 aa).

10-15 provides a ligand contact to ATP; it reads GAGKGT. Positions 30 to 59 are NMP; that stretch reads STGDLFRDNITNETELGVEAKRYLDAGDLV. Residues Thr31, Arg36, 57 to 59, 85 to 88, and Gln92 each bind AMP; these read DLV and GYPR. Residues 126–132 form an LID region; that stretch reads GRGRADD. Arg127 is an ATP binding site. The AMP site is built by Arg129 and Arg140. Gly166 serves as a coordination point for ATP.

It belongs to the adenylate kinase family. As to quaternary structure, monomer.

It localises to the cytoplasm. The catalysed reaction is AMP + ATP = 2 ADP. It participates in purine metabolism; AMP biosynthesis via salvage pathway; AMP from ADP: step 1/1. Catalyzes the reversible transfer of the terminal phosphate group between ATP and AMP. Plays an important role in cellular energy homeostasis and in adenine nucleotide metabolism. The chain is Adenylate kinase from Mycobacterium sp. (strain MCS).